A 337-amino-acid chain; its full sequence is Protein MICROTUBULE BINDING PROTEIN 2C (337 aa).

The disordered stretch occupies residues 80–147; the sequence is RGSMTYTKMP…STSSLTEKDR (68 aa). Positions 89–103 are enriched in basic and acidic residues; it reads PSRESLYKKTSEVKG. Over residues 120–142 the composition is skewed to polar residues; sequence KNVSSSQDGYAENFSTPSSTSSL. 3 coiled-coil regions span residues 143–194, 223–250, and 294–314; these read TEKD…MKKD, VEKL…LQGE, and LQKM…AKEN.

This sequence belongs to the microtubule binding protein 2C family. Interacts with KN-1. Binds to tobacco mosaic virus movement protein (TMV-MP) at microtubules. As to expression, constitutively expressed in leaves.

It is found in the cytoplasm. The protein localises to the cytoskeleton. Functionally, prevents homeodomain proteins (e.g. STM) association to plasmodesmata and, consequently, cell-to-cell transport. Binds to RNA. Alters KN1 RNA-binding capacity. Regulates cytoskeleton (e.g. actin) organization that determinates cell shape. Interferes with cell-to-cell transport of tobacco mosaic virus movement protein (TMV-MP) by mediating its accumulation at microtubules, thus interfering with cell-to-cell virus movement. The chain is Protein MICROTUBULE BINDING PROTEIN 2C from Nicotiana tabacum (Common tobacco).